The chain runs to 275 residues: Diaminopimelate epimerase (275 aa).

Positions 12, 45, and 65 each coordinate substrate. The Proton donor role is filled by Cys-74. Residues 75–76 (GN), Asn-158, Asn-191, and 209–210 (ER) each bind substrate. The Proton acceptor role is filled by Cys-218. Residue 219–220 (GT) participates in substrate binding.

This sequence belongs to the diaminopimelate epimerase family. As to quaternary structure, homodimer.

The protein resides in the cytoplasm. The catalysed reaction is (2S,6S)-2,6-diaminopimelate = meso-2,6-diaminopimelate. It functions in the pathway amino-acid biosynthesis; L-lysine biosynthesis via DAP pathway; DL-2,6-diaminopimelate from LL-2,6-diaminopimelate: step 1/1. Functionally, catalyzes the stereoinversion of LL-2,6-diaminopimelate (L,L-DAP) to meso-diaminopimelate (meso-DAP), a precursor of L-lysine and an essential component of the bacterial peptidoglycan. This Shewanella putrefaciens (strain CN-32 / ATCC BAA-453) protein is Diaminopimelate epimerase.